Here is a 455-residue protein sequence, read N- to C-terminus: Bleomycin hydrolase (455 aa).

N-acetylmethionine is present on Met1. Active-site residues include Cys73 and His372. Residue Lys391 is modified to N6-acetyllysine. Asn396 is an active-site residue.

Belongs to the peptidase C1 family. As to quaternary structure, homohexamer. Interacts with NUDT12 (via ANK repeats).

It localises to the cytoplasm. Its subcellular location is the cytoplasmic granule. It carries out the reaction Inactivates bleomycin B2 (a cytotoxic glycometallopeptide) by hydrolysis of a carboxyamide bond of beta-aminoalanine, but also shows general aminopeptidase activity. The specificity varies somewhat with source, but amino acid arylamides of Met, Leu and Ala are preferred.. Functionally, the normal physiological role of BLM hydrolase is unknown, but it catalyzes the inactivation of the antitumor drug BLM (a glycopeptide) by hydrolyzing the carboxamide bond of its B-aminoalaninamide moiety thus protecting normal and malignant cells from BLM toxicity. In Homo sapiens (Human), this protein is Bleomycin hydrolase (BLMH).